Reading from the N-terminus, the 58-residue chain is Small ribosomal subunit protein bS21 (58 aa).

The disordered stretch occupies residues 35-58; the sequence is REHYEKPSVKKKKKSEAARKRKFK. A compositionally biased stretch (basic residues) spans 43–58; sequence VKKKKKSEAARKRKFK.

The protein belongs to the bacterial ribosomal protein bS21 family.

The chain is Small ribosomal subunit protein bS21 from Clostridium botulinum (strain Alaska E43 / Type E3).